Consider the following 314-residue polypeptide: tRNA pseudouridine synthase B (314 aa).

Residue H43 participates in substrate binding. Catalysis depends on D48, which acts as the Nucleophile. Substrate-binding residues include Y76, Y179, and L200.

Belongs to the pseudouridine synthase TruB family. Type 1 subfamily.

The catalysed reaction is uridine(55) in tRNA = pseudouridine(55) in tRNA. Responsible for synthesis of pseudouridine from uracil-55 in the psi GC loop of transfer RNAs. The sequence is that of tRNA pseudouridine synthase B from Serratia proteamaculans (strain 568).